Here is a 689-residue protein sequence, read N- to C-terminus: MQNIEKINEEEAKKLLIELADKIAQYNHAYYIEDKPLVSDAEYDQLFNTNLKLEQKFPHLILENSPSKKIGAKVENKFAKVTHQVPMLSLSNVFDEEDVKDFLDRIKSFLRLDQFSPIFCEPKIDGLSFAATYKNGILTTGATRGDGYIGEDITANIKTIKDFPHKINNAPELLEVRGEIYIEKNDFTSLNQEQEQQGKDKFANPRNAAAGSLRQLDPSVTAKRPLKYFVYAIGSAKEELANSQDQLLAKFKELGFNVNEIGKLANSEEEIFSFYEYLKTNRKNLPYEIDGVVYKLNDFALQDRMGFIARSPRFATAHKFPAIIGQTKLLSITVQVGRTGTLTPVAELEPIEIGGVIVSRATLHNYQEIARKDVRVGDYVFLQRAGDVIPQITGVDLAKRSADATTFDPPLFCPSCNSKLHYVPEDIIIRCDNGLNCPAQNYERIRHFVSKNAMDIEGLGRKQVEFLIDKGLISNPYDIFFLKEKNEASLTKLENMDGWGKKSVENLFNNIEKSKNVSLPRFIYALGIRHIGEQNAKLLTREFGSYENFIAQMELLKENDPEIYQKLNNLDGIGDKMLVDIIDFFDVKENIELIKNLSEVLNIEDYKETREQSSLTGKIVVFTGSMPTLSRAEAKATAEKLGAKVAASVSSNTDLVIAGEDAGSKLKKAKELGIKIIDEAEWLTLVRDI.

NAD(+) contacts are provided by residues 40–44 (DAEYD), 89–90 (SL), and glutamate 121. Lysine 123 (N6-AMP-lysine intermediate) is an active-site residue. NAD(+) contacts are provided by arginine 144, glutamate 179, lysine 295, and lysine 319. Zn(2+) is bound by residues cysteine 413, cysteine 416, cysteine 431, and cysteine 437. In terms of domain architecture, BRCT spans 610 to 689 (REQSSLTGKI…AEWLTLVRDI (80 aa)).

Belongs to the NAD-dependent DNA ligase family. LigA subfamily. It depends on Mg(2+) as a cofactor. The cofactor is Mn(2+).

The catalysed reaction is NAD(+) + (deoxyribonucleotide)n-3'-hydroxyl + 5'-phospho-(deoxyribonucleotide)m = (deoxyribonucleotide)n+m + AMP + beta-nicotinamide D-nucleotide.. In terms of biological role, DNA ligase that catalyzes the formation of phosphodiester linkages between 5'-phosphoryl and 3'-hydroxyl groups in double-stranded DNA using NAD as a coenzyme and as the energy source for the reaction. It is essential for DNA replication and repair of damaged DNA. The sequence is that of DNA ligase from Rickettsia bellii (strain RML369-C).